The chain runs to 40 residues: Snaclec LmrLEC-1 (40 aa).

Cys2 and Cys13 are disulfide-bonded.

The protein belongs to the snaclec family. Dimer (non-covalently linked) of heterodimers of subunits alpha and beta (disulfide-linked). In terms of tissue distribution, expressed by the venom gland.

It is found in the secreted. In terms of biological role, interferes with one step of hemostasis (modulation of platelet aggregation, or coagulation cascade, for example). This Lachesis muta rhombeata (Bushmaster) protein is Snaclec LmrLEC-1.